The sequence spans 363 residues: S-adenosylmethionine:tRNA ribosyltransferase-isomerase (363 aa).

It belongs to the QueA family. In terms of assembly, monomer.

Its subcellular location is the cytoplasm. It catalyses the reaction 7-aminomethyl-7-carbaguanosine(34) in tRNA + S-adenosyl-L-methionine = epoxyqueuosine(34) in tRNA + adenine + L-methionine + 2 H(+). Its pathway is tRNA modification; tRNA-queuosine biosynthesis. Functionally, transfers and isomerizes the ribose moiety from AdoMet to the 7-aminomethyl group of 7-deazaguanine (preQ1-tRNA) to give epoxyqueuosine (oQ-tRNA). The polypeptide is S-adenosylmethionine:tRNA ribosyltransferase-isomerase (Haemophilus influenzae (strain PittEE)).